A 354-amino-acid polypeptide reads, in one-letter code: Membrane progestin receptor beta (354 aa).

Topologically, residues 1-75 (MTTAILERLS…FFSLFQKHNE (75 aa)) are cytoplasmic. The chain crosses the membrane as a helical span at residues 76–96 (VVNVWTHLLAALAVLLRFWAF). At 97 to 111 (AEAEALPWASTHSLP) the chain is on the extracellular side. Residues 112–132 (LLLFILSSITYLTCSLLAHLL) traverse the membrane as a helical segment. Topologically, residues 133–174 (QSKSELSHYTFYFVDYVGVSVYQYGSALAHFFYSSDQAWYDR) are cytoplasmic. The chain crosses the membrane as a helical span at residues 175-195 (FWLFFLPAAAFCGWLSCAGCC). The Extracellular portion of the chain corresponds to 196–213 (YAKYRYRRPYPVMRKICQ). A helical transmembrane segment spans residues 214–234 (VVPAGLAFILDISPVAHRVAL). Over 235–243 (CHLAGCQEQ) the chain is Cytoplasmic. The chain crosses the membrane as a helical span at residues 244 to 264 (AAWYHTLQILFFLVSAYFFSC). Residues 265 to 283 (PVPEKYFPGSCDIVGHGHQ) lie on the Extracellular side of the membrane. The chain crosses the membrane as a helical span at residues 284–304 (IFHAFLSICTLSQLEAILLDY). Residues 305–319 (QGRQEIFLQRHGPLS) lie on the Cytoplasmic side of the membrane. The helical transmembrane segment at 320–340 (VHMACLSFFFLAACSAATAAL) threads the bilayer. Over 341 to 354 (LRHKVKARLTKKDS) the chain is Extracellular.

Belongs to the ADIPOR family. Highly expressed in the hypothalamus. Also expressed in spinal cord, kidney and testis.

The protein resides in the cell membrane. Plasma membrane progesterone (P4) receptor coupled to G proteins. Seems to act through a G(i) mediated pathway. May be involved in oocyte maturation. Also binds dehydroepiandrosterone (DHEA), pregnanolone, pregnenolone and allopregnanolone. This chain is Membrane progestin receptor beta, found in Homo sapiens (Human).